Consider the following 239-residue polypeptide: Lactate utilization protein A (239 aa).

This sequence belongs to the LutA/YkgE family.

Its function is as follows. Is involved in L-lactate degradation and allows cells to grow with lactate as the sole carbon source. This Shouchella clausii (strain KSM-K16) (Alkalihalobacillus clausii) protein is Lactate utilization protein A.